The chain runs to 111 residues: Large ribosomal subunit protein uL24 (111 aa).

The protein belongs to the universal ribosomal protein uL24 family. Part of the 50S ribosomal subunit.

Functionally, one of two assembly initiator proteins, it binds directly to the 5'-end of the 23S rRNA, where it nucleates assembly of the 50S subunit. Its function is as follows. One of the proteins that surrounds the polypeptide exit tunnel on the outside of the subunit. The sequence is that of Large ribosomal subunit protein uL24 from Streptococcus pneumoniae (strain Hungary19A-6).